A 130-amino-acid chain; its full sequence is UPF0212 protein TSIB_1358 (130 aa).

Belongs to the UPF0212 family.

The protein is UPF0212 protein TSIB_1358 of Thermococcus sibiricus (strain DSM 12597 / MM 739).